We begin with the raw amino-acid sequence, 769 residues long: Signal transducer and activator of transcription 3.1 (769 aa).

Residues 150 to 162 (DVRKKVQDLEQKM) carry the Essential for nuclear import motif. Residues 580–670 (WNEGYIMGFI…DATNILVSPL (91 aa)) enclose the SH2 domain. Phosphoserine; by NLK is present on serine 728.

It belongs to the transcription factor STAT family. Forms a homodimer or a heterodimer with a related family member, such as stat1. Interacts with nlk.2. Phosphorylation of both tyrosine and serine residues, together with dimerization, is required for mesoderm induction.

The protein resides in the cytoplasm. It is found in the nucleus. Transcription factor that binds to target promoter sequences and activates transcription upon il6st/gp130 stimulation. Mediates ventralization of embryos, at least in part via inhibition of smad2 signaling. Required for hairy2 to induce dll1/delta1 and promote neural crest cell proliferation and differentiation. Involved in TGFbeta-mediated mesoderm induction in early embryos, acting downstream of map3k7/tak1 and nlk.2. This chain is Signal transducer and activator of transcription 3.1 (stat3.1), found in Xenopus laevis (African clawed frog).